A 272-amino-acid polypeptide reads, in one-letter code: Acyl-[acyl-carrier-protein]--UDP-N-acetylglucosamine O-acyltransferase (272 aa).

The protein belongs to the transferase hexapeptide repeat family. LpxA subfamily. Homotrimer.

Its subcellular location is the cytoplasm. It carries out the reaction a (3R)-hydroxyacyl-[ACP] + UDP-N-acetyl-alpha-D-glucosamine = a UDP-3-O-[(3R)-3-hydroxyacyl]-N-acetyl-alpha-D-glucosamine + holo-[ACP]. It functions in the pathway glycolipid biosynthesis; lipid IV(A) biosynthesis; lipid IV(A) from (3R)-3-hydroxytetradecanoyl-[acyl-carrier-protein] and UDP-N-acetyl-alpha-D-glucosamine: step 1/6. In terms of biological role, involved in the biosynthesis of lipid A, a phosphorylated glycolipid that anchors the lipopolysaccharide to the outer membrane of the cell. In Rhizobium etli (strain ATCC 51251 / DSM 11541 / JCM 21823 / NBRC 15573 / CFN 42), this protein is Acyl-[acyl-carrier-protein]--UDP-N-acetylglucosamine O-acyltransferase.